Consider the following 189-residue polypeptide: Frataxin-like protein, mitochondrial (189 aa).

The N-terminal 50 residues, 1 to 50 (MNCARLHQRIPLRAMALTTTSYPALAPSHSFANASTSVMTASAMAVAHRA), are a transit peptide targeting the mitochondrion.

It belongs to the frataxin family. In terms of assembly, interacts with IscU; the interaction is direct.

Its subcellular location is the mitochondrion. The catalysed reaction is 4 Fe(2+) + O2 + 4 H(+) = 4 Fe(3+) + 2 H2O. Functionally, iron-binding protein which binds 2 iron atoms per monomer. Probably, acts as an iron carrier for the biosynthesis of Fe-S clusters. Stimulates the cysteine desulphurase activity of IscS in the presence of IscU. In Leishmania donovani, this protein is Frataxin-like protein, mitochondrial.